The following is a 418-amino-acid chain: EPS I polysaccharide export inner membrane protein EpsF (418 aa).

10 helical membrane-spanning segments follow: residues 21 to 41, 45 to 65, 142 to 162, 170 to 190, 222 to 242, 262 to 282, 296 to 316, 326 to 346, 347 to 367, and 377 to 397; these read VLVV…LPII, CAAI…LATA, PLLV…IAIY, YVVF…GSAI, AGTH…VLFL, LIVL…EFVM, SAWE…AWLL, MAFL…PAVG, ARLF…FFFA, and KTLA…IVSA.

This sequence to S.marcescens SfuB.

It localises to the cell inner membrane. Its function is as follows. Probably involved in polymerization and/or export of exopolysaccharide EPS I which functions as a virulence factor. May play a role in export of EPS I or its intermediates across the membranes. The sequence is that of EPS I polysaccharide export inner membrane protein EpsF (epsF) from Ralstonia nicotianae (strain ATCC BAA-1114 / GMI1000) (Ralstonia solanacearum).